Consider the following 582-residue polypeptide: ATP-dependent lipid A-core flippase (582 aa).

5 helical membrane passes run 16-36, 64-84, 153-173, 253-273, and 275-295; these read LWPTIAPFKAGLIVAGIALIL, LLWMPLVVIGLMILRGITSYI, IIGLFIMMFYYSWQLSIILVV, PIIQLIASLALAFVLYAASFP, and VMDSLTAGTITVVFSSMIALM. An ABC transmembrane type-1 domain is found at 28 to 310; sequence IVAGIALILN…LTNVNAQFQR (283 aa). The ABC transporter domain maps to 342–578; that stretch reads LEFRNVTFTY…HGVYAQLHKM (237 aa). 376 to 383 contacts ATP; it reads GRSGSGKS.

The protein belongs to the ABC transporter superfamily. Lipid exporter (TC 3.A.1.106) family. In terms of assembly, homodimer.

It localises to the cell inner membrane. It catalyses the reaction ATP + H2O + lipid A-core oligosaccharideSide 1 = ADP + phosphate + lipid A-core oligosaccharideSide 2.. Involved in lipopolysaccharide (LPS) biosynthesis. Translocates lipid A-core from the inner to the outer leaflet of the inner membrane. Transmembrane domains (TMD) form a pore in the inner membrane and the ATP-binding domain (NBD) is responsible for energy generation. This chain is ATP-dependent lipid A-core flippase, found in Salmonella paratyphi A (strain ATCC 9150 / SARB42).